Here is a 387-residue protein sequence, read N- to C-terminus: MKILKSNPFLALANNYMIDAPEPSNISYFWNFGSLLACVLVIQIVIGILLACFYIPNMDLAFLSVERIVRDVNYGFLLRAFHANGASFFFIFLYLHIGRGLYYGSYKYPRTMTWNIGVIIFLLTIITAFLGYCLPANQMSFWGATVITNLLSAVPFIGDDLVHLLWGGFSVSNPTLNRFFSLHYLMPFVIAALSVMHLIALHTNGSSNPLGVTANMDRIPMNPYYLIKDLITIFIFLIGINYMAFYNPYGFMEPDCALPADPLKTPMSIVPEWYLLPFYAILRAIPNFQLGVIAMLLSILVLLLLPLLDFSAIRGNSFNPFGKFFFWTFVADFVILAWIGGSHPENVFITIGAIATIFYFSYFFILIPVYTILGNTLIDLNLSSIKR.

4 consecutive transmembrane segments (helical) span residues 32-52 (FGSL…LLAC), 76-98 (FLLR…LHIG), 113-133 (TWNI…LGYC), and 179-199 (FFSL…MHLI). Positions 82 and 96 each coordinate heme b. Heme b-binding residues include His-183 and His-197. His-202 is a binding site for a ubiquinone. 4 helical membrane-spanning segments follow: residues 225 to 245 (YLIK…YMAF), 289 to 309 (QLGV…PLLD), 321 to 341 (FGKF…WIGG), and 348 to 368 (FITI…ILIP).

Belongs to the cytochrome b family. In terms of assembly, fungal cytochrome b-c1 complex contains 10 subunits; 3 respiratory subunits, 2 core proteins and 5 low-molecular weight proteins. Cytochrome b-c1 complex is a homodimer. Heme b is required as a cofactor.

The protein resides in the mitochondrion inner membrane. Functionally, component of the ubiquinol-cytochrome c reductase complex (complex III or cytochrome b-c1 complex) that is part of the mitochondrial respiratory chain. The b-c1 complex mediates electron transfer from ubiquinol to cytochrome c. Contributes to the generation of a proton gradient across the mitochondrial membrane that is then used for ATP synthesis. The chain is Cytochrome b (cob) from Schizosaccharomyces pombe (strain 972 / ATCC 24843) (Fission yeast).